A 136-amino-acid polypeptide reads, in one-letter code: Large ribosomal subunit protein uL16c (136 aa).

The tract at residues 1–20 (MLSPKRTRFRKQHRGRMKGK) is disordered.

This sequence belongs to the universal ribosomal protein uL16 family. In terms of assembly, part of the 50S ribosomal subunit.

The protein localises to the plastid. It localises to the chloroplast. The chain is Large ribosomal subunit protein uL16c from Triticum aestivum (Wheat).